The chain runs to 75 residues: Protein B (75 aa).

The protein is Protein B of Dicentrarchus labrax (European seabass).